The sequence spans 66 residues: Putative antitoxin APE_0279a.1 (66 aa).

The protein belongs to the UPF0165 family.

In terms of biological role, possibly the antitoxin component of a type II toxin-antitoxin (TA) system. This is Putative antitoxin APE_0279a.1 from Aeropyrum pernix (strain ATCC 700893 / DSM 11879 / JCM 9820 / NBRC 100138 / K1).